We begin with the raw amino-acid sequence, 180 residues long: Pro-glucagon (180 aa).

The signal sequence occupies residues 1–20; the sequence is MKTVYIVAGLFVMLVQGSWQ. Residues 23-59 are disordered; the sequence is PQDTEENARSFPASQTEPLEDPDQINEDKRHSQGTFT. A Phosphoserine modification is found at Ser-54. A propeptide spanning residues 84–89 is cleaved from the precursor; sequence NRNNIA. Phosphoserine occurs at positions 105 and 108. At Arg-127 the chain carries Arginine amide. Residues 131 to 145 constitute a propeptide that is removed on maturation; it reads DFPEEVAIAEELGRR. Ser-150 and Ser-152 each carry phosphoserine.

Belongs to the glucagon family. Proglucagon is post-translationally processed in a tissue-specific manner in pancreatic A cells and intestinal L cells. In pancreatic A cells, the major bioactive hormone is glucagon cleaved by PCSK2/PC2. In the intestinal L cells PCSK1/PC1 liberates GLP-1, GLP-2, glicentin and oxyntomodulin. GLP-1 is further N-terminally truncated by post-translational processing in the intestinal L cells resulting in GLP-1(7-37) GLP-1-(7-36)amide. The C-terminal amidation is neither important for the metabolism of GLP-1 nor for its effects on the endocrine pancreas. Glucagon is secreted in the A cells of the islets of Langerhans. GLP-1, GLP-2, oxyntomodulin and glicentin are secreted from enteroendocrine cells throughout the gastrointestinal tract.

It is found in the secreted. Plays a key role in glucose metabolism and homeostasis. Regulates blood glucose by increasing gluconeogenesis and decreasing glycolysis. A counterregulatory hormone of insulin, raises plasma glucose levels in response to insulin-induced hypoglycemia. Plays an important role in initiating and maintaining hyperglycemic conditions in diabetes. Its function is as follows. Potent stimulator of glucose-dependent insulin release. Also stimulates insulin release in response to IL6. Plays important roles on gastric motility and the suppression of plasma glucagon levels. May be involved in the suppression of satiety and stimulation of glucose disposal in peripheral tissues, independent of the actions of insulin. Has growth-promoting activities on intestinal epithelium. May also regulate the hypothalamic pituitary axis (HPA) via effects on LH, TSH, CRH, oxytocin, and vasopressin secretion. Increases islet mass through stimulation of islet neogenesis and pancreatic beta cell proliferation. Inhibits beta cell apoptosis. In terms of biological role, stimulates intestinal growth and up-regulates villus height in the small intestine, concomitant with increased crypt cell proliferation and decreased enterocyte apoptosis. The gastrointestinal tract, from the stomach to the colon is the principal target for GLP-2 action. Plays a key role in nutrient homeostasis, enhancing nutrient assimilation through enhanced gastrointestinal function, as well as increasing nutrient disposal. Stimulates intestinal glucose transport and decreases mucosal permeability. Functionally, may modulate gastric acid secretion and the gastro-pyloro-duodenal activity. May play an important role in intestinal mucosal growth in the early period of life. Oxyntomodulin significantly reduces food intake. This Rattus norvegicus (Rat) protein is Pro-glucagon (Gcg).